A 271-amino-acid polypeptide reads, in one-letter code: Undecaprenyl-diphosphatase 2 (271 aa).

Helical transmembrane passes span 1 to 21 (MNFF…LFPI), 46 to 66 (NFLE…IVYF), 88 to 108 (ALIV…EQTI), 111 to 131 (AFSD…LLFF), 146 to 166 (LKGW…IPGF), 190 to 210 (SMLL…PKLI), 220 to 240 (LSLI…YILM), and 251 to 271 (MLPF…SKAI).

The protein belongs to the UppP family.

The protein resides in the cell membrane. The enzyme catalyses di-trans,octa-cis-undecaprenyl diphosphate + H2O = di-trans,octa-cis-undecaprenyl phosphate + phosphate + H(+). Its function is as follows. Catalyzes the dephosphorylation of undecaprenyl diphosphate (UPP). Confers resistance to bacitracin. The polypeptide is Undecaprenyl-diphosphatase 2 (Oenococcus oeni (strain ATCC BAA-331 / PSU-1)).